Here is a 494-residue protein sequence, read N- to C-terminus: Glycerol kinase (494 aa).

Thr13 contacts ADP. Residues Thr13, Thr14, and Ser15 each contribute to the ATP site. Thr13 contacts sn-glycerol 3-phosphate. Position 17 (Arg17) interacts with ADP. Sn-glycerol 3-phosphate is bound by residues Arg83, Glu84, Tyr135, and Asp244. Residues Arg83, Glu84, Tyr135, Asp244, and Gln245 each coordinate glycerol. ADP-binding residues include Thr266 and Gly309. ATP contacts are provided by Thr266, Gly309, Gln313, and Gly410. Gly410 and Asn414 together coordinate ADP.

It belongs to the FGGY kinase family.

The enzyme catalyses glycerol + ATP = sn-glycerol 3-phosphate + ADP + H(+). It functions in the pathway polyol metabolism; glycerol degradation via glycerol kinase pathway; sn-glycerol 3-phosphate from glycerol: step 1/1. Its activity is regulated as follows. Inhibited by fructose 1,6-bisphosphate (FBP). In terms of biological role, key enzyme in the regulation of glycerol uptake and metabolism. Catalyzes the phosphorylation of glycerol to yield sn-glycerol 3-phosphate. This Shewanella putrefaciens (strain CN-32 / ATCC BAA-453) protein is Glycerol kinase.